A 464-amino-acid chain; its full sequence is Citrate synthase, mitochondrial (464 aa).

Residues 1–27 constitute a mitochondrion transit peptide; the sequence is MALLTAATRLLGAKNSSCLVLAARHAS. An SIFI-degron motif is present at residues 2 to 21; the sequence is ALLTAATRLLGAKNSSCLVL. Lysine 57 bears the N6-succinyllysine mark. Lysine 76 carries the post-translational modification N6-acetyllysine; alternate. Lysine 76 is modified (N6-succinyllysine; alternate). N6-succinyllysine occurs at positions 103 and 193. Serine 226 carries the phosphoserine modification. Residue histidine 301 is part of the active site. N6-acetyllysine; alternate is present on residues lysine 321 and lysine 327. Residues lysine 321 and lysine 327 each carry the N6-succinyllysine; alternate modification. Histidine 347 is an active-site residue. Arginine 356 serves as a coordination point for oxaloacetate. An N6-acetyllysine; alternate modification is found at lysine 375. Lysine 375 carries the N6-succinyllysine; alternate modification. An N6-acetyllysine modification is found at lysine 382. Lysine 393 is modified (N6-acetyllysine; alternate). Lysine 393 carries the post-translational modification N6-succinyllysine; alternate. The residue at position 395 (lysine 395) is an N6,N6,N6-trimethyllysine. Aspartate 402 is an active-site residue. Arginine 428 and arginine 448 together coordinate oxaloacetate. Lysine 450 bears the N6-succinyllysine mark. N6-acetyllysine; alternate is present on lysine 459. Lysine 459 is modified (N6-succinyllysine; alternate).

The protein belongs to the citrate synthase family. Homodimer. Methylated. Trimethylation at Lys-395 by CSKMT decreases citrate synthase activity. Post-translationally, in response to mitochondrial stress, the precursor protein is ubiquitinated by the SIFI complex in the cytoplasm before mitochondrial import, leading to its degradation. Within the SIFI complex, UBR4 initiates ubiquitin chain that are further elongated or branched by KCMF1.

Its subcellular location is the mitochondrion matrix. It carries out the reaction oxaloacetate + acetyl-CoA + H2O = citrate + CoA + H(+). It participates in carbohydrate metabolism; tricarboxylic acid cycle; isocitrate from oxaloacetate: step 1/2. In terms of biological role, key enzyme of the Krebs tricarboxylic acid cycle which catalyzes the synthesis of citrate from acetyl coenzyme A and oxaloacetate. In Mus musculus (Mouse), this protein is Citrate synthase, mitochondrial (Cs).